The following is a 693-amino-acid chain: Putative adenosylcobalamin-dependent ribonucleoside-triphosphate reductase (693 aa).

A disulfide bridge links C90 with C386. Residues C375 and E377 contribute to the active site.

It belongs to the class II ribonucleoside-triphosphate reductase family. Adenosylcob(III)alamin is required as a cofactor.

It carries out the reaction a 2'-deoxyribonucleoside 5'-triphosphate + [thioredoxin]-disulfide + H2O = a ribonucleoside 5'-triphosphate + [thioredoxin]-dithiol. The protein is Putative adenosylcobalamin-dependent ribonucleoside-triphosphate reductase (50) of Mycobacterium phage D29 (Mycobacteriophage D29).